The following is a 344-amino-acid chain: Phosphoribosylformylglycinamidine cyclo-ligase (344 aa).

It belongs to the AIR synthase family.

Its subcellular location is the cytoplasm. The catalysed reaction is 2-formamido-N(1)-(5-O-phospho-beta-D-ribosyl)acetamidine + ATP = 5-amino-1-(5-phospho-beta-D-ribosyl)imidazole + ADP + phosphate + H(+). It functions in the pathway purine metabolism; IMP biosynthesis via de novo pathway; 5-amino-1-(5-phospho-D-ribosyl)imidazole from N(2)-formyl-N(1)-(5-phospho-D-ribosyl)glycinamide: step 2/2. This chain is Phosphoribosylformylglycinamidine cyclo-ligase, found in Neisseria gonorrhoeae (strain ATCC 700825 / FA 1090).